The chain runs to 652 residues: DNA ligase (652 aa).

NAD(+) contacts are provided by residues 29–33 (DSEYD), 78–79 (SL), and Glu-107. Lys-109 (N6-AMP-lysine intermediate) is an active-site residue. NAD(+)-binding residues include Arg-130, Glu-164, Lys-278, and Lys-302. Positions 395, 398, 413, and 418 each coordinate Zn(2+). In terms of domain architecture, BRCT spans 577–652 (DRQAELFGLT…IEDEDWLLNL (76 aa)).

This sequence belongs to the NAD-dependent DNA ligase family. LigA subfamily. The cofactor is Mg(2+). Requires Mn(2+) as cofactor.

The enzyme catalyses NAD(+) + (deoxyribonucleotide)n-3'-hydroxyl + 5'-phospho-(deoxyribonucleotide)m = (deoxyribonucleotide)n+m + AMP + beta-nicotinamide D-nucleotide.. DNA ligase that catalyzes the formation of phosphodiester linkages between 5'-phosphoryl and 3'-hydroxyl groups in double-stranded DNA using NAD as a coenzyme and as the energy source for the reaction. It is essential for DNA replication and repair of damaged DNA. This is DNA ligase from Streptococcus equi subsp. zooepidemicus (strain MGCS10565).